Consider the following 195-residue polypeptide: Protein GrpE (195 aa).

Belongs to the GrpE family. In terms of assembly, homodimer.

It is found in the cytoplasm. In terms of biological role, participates actively in the response to hyperosmotic and heat shock by preventing the aggregation of stress-denatured proteins, in association with DnaK and GrpE. It is the nucleotide exchange factor for DnaK and may function as a thermosensor. Unfolded proteins bind initially to DnaJ; upon interaction with the DnaJ-bound protein, DnaK hydrolyzes its bound ATP, resulting in the formation of a stable complex. GrpE releases ADP from DnaK; ATP binding to DnaK triggers the release of the substrate protein, thus completing the reaction cycle. Several rounds of ATP-dependent interactions between DnaJ, DnaK and GrpE are required for fully efficient folding. The polypeptide is Protein GrpE (Francisella tularensis subsp. novicida (strain U112)).